We begin with the raw amino-acid sequence, 531 residues long: Aspartate--tRNA ligase, cytoplasmic (531 aa).

The interval 1 to 45 (MADAAEGEQPKLSKKELNKLARKAKKDEKAGEKGGNQQQAAAMDQ) is disordered. Residues 8-32 (EQPKLSKKELNKLARKAKKDEKAGE) are compositionally biased toward basic and acidic residues. An L-aspartate-binding site is contributed by E259. Positions 281 to 284 (QLYK) are aspartate. R303 provides a ligand contact to L-aspartate. Residues 303–305 (RAE), 311–313 (RHM), and E454 each bind ATP. 2 residues coordinate L-aspartate: S457 and R461. 502–505 (GLER) contacts ATP.

Belongs to the class-II aminoacyl-tRNA synthetase family. Type 2 subfamily. As to quaternary structure, homodimer.

The protein resides in the cytoplasm. It carries out the reaction tRNA(Asp) + L-aspartate + ATP = L-aspartyl-tRNA(Asp) + AMP + diphosphate. This chain is Aspartate--tRNA ligase, cytoplasmic, found in Caenorhabditis elegans.